Consider the following 217-residue polypeptide: Putative thymidylate synthase (217 aa).

The active site involves Cys-139.

The protein belongs to the thymidylate synthase family. Archaeal-type ThyA subfamily. As to quaternary structure, monomer.

The protein resides in the cytoplasm. Its pathway is pyrimidine metabolism; dTTP biosynthesis. In terms of biological role, may catalyze the biosynthesis of dTMP using an unknown cosubstrate. The chain is Putative thymidylate synthase from Methanosarcina acetivorans (strain ATCC 35395 / DSM 2834 / JCM 12185 / C2A).